The primary structure comprises 475 residues: UDP-N-acetylmuramate--L-alanine ligase (475 aa).

118-124 (GTHGKTT) provides a ligand contact to ATP.

This sequence belongs to the MurCDEF family.

It localises to the cytoplasm. It carries out the reaction UDP-N-acetyl-alpha-D-muramate + L-alanine + ATP = UDP-N-acetyl-alpha-D-muramoyl-L-alanine + ADP + phosphate + H(+). Its pathway is cell wall biogenesis; peptidoglycan biosynthesis. Functionally, cell wall formation. The protein is UDP-N-acetylmuramate--L-alanine ligase of Thermosynechococcus vestitus (strain NIES-2133 / IAM M-273 / BP-1).